The sequence spans 197 residues: C4-dicarboxylate transport transcriptional regulatory protein DctR (197 aa).

The Response regulatory domain maps to 4-120 (TVHIVDDEES…HIVDIALSAI (117 aa)). A 4-aspartylphosphate modification is found at Asp-53. An inter-domain linker region spans residues 128 to 135 (AEAQAREA). In terms of domain architecture, HTH luxR-type spans 136-197 (VAARRASLSA…RNIADLARMT (62 aa)). The H-T-H motif DNA-binding region spans 160-179 (NKQIAERLGIAMRTVEVHRS).

Post-translationally, phosphorylated by DctS.

It is found in the cytoplasm. Its function is as follows. Member of the two-component regulatory system DctS/DctR involved in the transport of C4-dicarboxylates. DctR functions as a transcriptional repressor of genes for C4-dicarboxylate transport. This Rhodobacter capsulatus (Rhodopseudomonas capsulata) protein is C4-dicarboxylate transport transcriptional regulatory protein DctR (dctR).